The following is a 708-amino-acid chain: Glutamate--tRNA ligase, cytoplasmic (708 aa).

2 interaction with ARC1 regions span residues 106 to 115 and 141 to 157; these read NLRTFILGGL and KVDVNVSRWYTLLEMDP. 205–207 provides a ligand contact to L-glutamate; the sequence is RFP. Positions 210-219 match the 'HIGH' region motif; the sequence is PSGYLHIGHA. His-215 provides a ligand contact to ATP. An L-glutamate-binding site is contributed by Asp-241. Thr-300 carries the phosphothreonine modification. L-glutamate is bound by residues 382 to 386 and Arg-400; that span reads YDFCV. ATP-binding positions include Glu-403 and 437–441; that span reads LLSKR. Residues 437-441 carry the 'KMSKS' region motif; it reads LLSKR.

The protein belongs to the class-I aminoacyl-tRNA synthetase family. Glutamate--tRNA ligase type 2 subfamily. In terms of assembly, component of a yeast aminoacyl-tRNA synthase (aaRS) complex formed by methionyl-tRNA synthase MES1, glutamyl-tRNA synthase GUS1 and the tRNA aminoacylation cofactor ARC1 in a stoichiometric complex. Interacts (via N-ter) with ARC1 (via N-ter). Can also form a stable binary complex with ARC1 that is functional in terms of aminoacylation. ARC1 increases the affinity for cognate tRNAs due to the presence of a tRNA binding domain in the middle and C-terminal part of ARC1.

Its subcellular location is the cytoplasm. The protein resides in the mitochondrion. The catalysed reaction is tRNA(Glu) + L-glutamate + ATP = L-glutamyl-tRNA(Glu) + AMP + diphosphate. Catalyzes the attachment of glutamate to tRNA(Glu) in a two-step reaction: glutamate is first activated by ATP to form Glu-AMP and then transferred to the acceptor end of tRNA(Glu). In mitochondria, constitutes the nondiscriminating glutamyl-tRNA synthase that generates the mitochondrial mischarged glutamyl-tRNA(Gln) substrate for the tRNA-dependent amidotransferase (AdT), which generates mitochondrial glutaminyl-tRNA(Gln) by transamidation of glutamyl-tRNA(Gln). The polypeptide is Glutamate--tRNA ligase, cytoplasmic (GUS1) (Saccharomyces cerevisiae (strain ATCC 204508 / S288c) (Baker's yeast)).